The sequence spans 280 residues: Transmembrane protein 45B (280 aa).

7 helical membrane passes run 7–27 (HALPGSFFLVFGLWWSVKYPL), 49–69 (LIEGILKAAFALIGILAEQFV), 96–116 (MYLFYGISGVVDILTFLPLNL), 120–140 (LDRLSLGIAVIIEGLLFYYHV), 150–170 (IHSLLLIAVFGGAISIMIEVF), 184–204 (LTILQGTWFWQIGFVLYPLGG), and 216–236 (VMFITMCFCWHYAVALLIMAI).

It belongs to the TMEM45 family.

The protein resides in the membrane. The sequence is that of Transmembrane protein 45B (tmem45b) from Xenopus tropicalis (Western clawed frog).